Consider the following 483-residue polypeptide: Protein nucleotidyltransferase YdiU (483 aa).

8 residues coordinate ATP: Gly87, Gly89, Arg90, Lys110, Asp122, Gly123, Arg173, and Arg180. Residue Asp249 is the Proton acceptor of the active site. Positions 250 and 259 each coordinate Mg(2+). ATP is bound at residue Asp259.

Belongs to the SELO family. Mg(2+) is required as a cofactor. The cofactor is Mn(2+).

The enzyme catalyses L-seryl-[protein] + ATP = 3-O-(5'-adenylyl)-L-seryl-[protein] + diphosphate. It catalyses the reaction L-threonyl-[protein] + ATP = 3-O-(5'-adenylyl)-L-threonyl-[protein] + diphosphate. It carries out the reaction L-tyrosyl-[protein] + ATP = O-(5'-adenylyl)-L-tyrosyl-[protein] + diphosphate. The catalysed reaction is L-histidyl-[protein] + UTP = N(tele)-(5'-uridylyl)-L-histidyl-[protein] + diphosphate. The enzyme catalyses L-seryl-[protein] + UTP = O-(5'-uridylyl)-L-seryl-[protein] + diphosphate. It catalyses the reaction L-tyrosyl-[protein] + UTP = O-(5'-uridylyl)-L-tyrosyl-[protein] + diphosphate. In terms of biological role, nucleotidyltransferase involved in the post-translational modification of proteins. It can catalyze the addition of adenosine monophosphate (AMP) or uridine monophosphate (UMP) to a protein, resulting in modifications known as AMPylation and UMPylation. This Pelagibacter ubique (strain HTCC1062) protein is Protein nucleotidyltransferase YdiU.